Here is a 418-residue protein sequence, read N- to C-terminus: Voltage-gated ClC-type chloride channel ClcB (418 aa).

Helical transmembrane passes span 5–25 (LLIA…FRHA), 54–74 (LLTP…WQKF), 146–166 (LWIA…PLAG), 168–188 (LFIA…PVII), 222–242 (ALII…LTLM), 258–278 (WQLA…PAVW), 291–311 (APPL…AVLA), 316–336 (GAPG…GMLY), 352–372 (LLLG…APIM), and 380–400 (MTGE…ASVI).

The protein belongs to the chloride channel (TC 2.A.49) family. ClcB subfamily.

It is found in the cell inner membrane. Probably acts as an electrical shunt for an outwardly-directed proton pump that is linked to amino acid decarboxylation, as part of the extreme acid resistance (XAR) response. The protein is Voltage-gated ClC-type chloride channel ClcB of Escherichia coli O127:H6 (strain E2348/69 / EPEC).